Consider the following 540-residue polypeptide: CTP synthase (540 aa).

Positions 1 to 273 (MNNKDLKTKF…DDFILQHFKL (273 aa)) are amidoligase domain. Ser19 lines the CTP pocket. Residue Ser19 coordinates UTP. 20 to 25 (SLGKGI) serves as a coordination point for ATP. Residue Tyr60 coordinates L-glutamine. Residue Asp77 coordinates ATP. Asp77 and Glu147 together coordinate Mg(2+). Residues 154 to 156 (DIE), 194 to 199 (KTKPTQ), and Lys230 each bind CTP. UTP contacts are provided by residues 194 to 199 (KTKPTQ) and Lys230. Residues 306-539 (YIVLHDAYLS…VEASLLNQKN (234 aa)) form the Glutamine amidotransferase type-1 domain. Gly361 contacts L-glutamine. Cys388 (nucleophile; for glutamine hydrolysis) is an active-site residue. Residues 389 to 392 (LGMQ), Glu412, and Arg466 each bind L-glutamine. Catalysis depends on residues His512 and Glu514.

This sequence belongs to the CTP synthase family. In terms of assembly, homotetramer.

It catalyses the reaction UTP + L-glutamine + ATP + H2O = CTP + L-glutamate + ADP + phosphate + 2 H(+). The catalysed reaction is L-glutamine + H2O = L-glutamate + NH4(+). It carries out the reaction UTP + NH4(+) + ATP = CTP + ADP + phosphate + 2 H(+). The protein operates within pyrimidine metabolism; CTP biosynthesis via de novo pathway; CTP from UDP: step 2/2. Allosterically activated by GTP, when glutamine is the substrate; GTP has no effect on the reaction when ammonia is the substrate. The allosteric effector GTP functions by stabilizing the protein conformation that binds the tetrahedral intermediate(s) formed during glutamine hydrolysis. Inhibited by the product CTP, via allosteric rather than competitive inhibition. Catalyzes the ATP-dependent amination of UTP to CTP with either L-glutamine or ammonia as the source of nitrogen. Regulates intracellular CTP levels through interactions with the four ribonucleotide triphosphates. This is CTP synthase from Onion yellows phytoplasma (strain OY-M).